A 399-amino-acid chain; its full sequence is Acetate kinase (399 aa).

Asn-10 serves as a coordination point for Mg(2+). Lys-17 contacts ATP. Arg-91 serves as a coordination point for substrate. The active-site Proton donor/acceptor is Asp-148. Residues His-208–Gly-212, Asp-283–Arg-285, and Gly-331–Asn-335 contribute to the ATP site. Glu-385 contributes to the Mg(2+) binding site.

Belongs to the acetokinase family. As to quaternary structure, homodimer. Requires Mg(2+) as cofactor. Mn(2+) is required as a cofactor.

The protein resides in the cytoplasm. It carries out the reaction acetate + ATP = acetyl phosphate + ADP. Its pathway is metabolic intermediate biosynthesis; acetyl-CoA biosynthesis; acetyl-CoA from acetate: step 1/2. Its function is as follows. Catalyzes the formation of acetyl phosphate from acetate and ATP. Can also catalyze the reverse reaction. This chain is Acetate kinase, found in Shewanella baltica (strain OS223).